Here is a 545-residue protein sequence, read N- to C-terminus: Glucose-6-phosphate isomerase (545 aa).

The active-site Proton donor is glutamate 351. Catalysis depends on residues histidine 382 and lysine 510.

Belongs to the GPI family.

It is found in the cytoplasm. The catalysed reaction is alpha-D-glucose 6-phosphate = beta-D-fructose 6-phosphate. It functions in the pathway carbohydrate biosynthesis; gluconeogenesis. The protein operates within carbohydrate degradation; glycolysis; D-glyceraldehyde 3-phosphate and glycerone phosphate from D-glucose: step 2/4. Catalyzes the reversible isomerization of glucose-6-phosphate to fructose-6-phosphate. The polypeptide is Glucose-6-phosphate isomerase (Shewanella baltica (strain OS185)).